A 100-amino-acid polypeptide reads, in one-letter code: Signal recognition particle 19 kDa protein (100 aa).

Belongs to the SRP19 family. In terms of assembly, part of the signal recognition particle protein translocation system, which is composed of SRP and FtsY. Archaeal SRP consists of a 7S RNA molecule of 300 nucleotides and two protein subunits: SRP54 and SRP19.

It localises to the cytoplasm. Functionally, involved in targeting and insertion of nascent membrane proteins into the cytoplasmic membrane. Binds directly to 7S RNA and mediates binding of the 54 kDa subunit of the SRP. In Caldivirga maquilingensis (strain ATCC 700844 / DSM 13496 / JCM 10307 / IC-167), this protein is Signal recognition particle 19 kDa protein.